A 339-amino-acid polypeptide reads, in one-letter code: Glyceraldehyde-3-phosphate dehydrogenase (339 aa).

NAD(+)-binding positions include 12 to 13 (RI), D39, R84, and S127. D-glyceraldehyde 3-phosphate-binding positions include 157-159 (SCT), T188, R203, 216-217 (TG), and R239. Residue C158 is the Nucleophile of the active site. N320 lines the NAD(+) pocket.

This sequence belongs to the glyceraldehyde-3-phosphate dehydrogenase family. As to quaternary structure, homotetramer.

It localises to the cytoplasm. It carries out the reaction D-glyceraldehyde 3-phosphate + phosphate + NAD(+) = (2R)-3-phospho-glyceroyl phosphate + NADH + H(+). Its pathway is carbohydrate degradation; glycolysis; pyruvate from D-glyceraldehyde 3-phosphate: step 1/5. Its function is as follows. Catalyzes the oxidative phosphorylation of glyceraldehyde 3-phosphate (G3P) to 1,3-bisphosphoglycerate (BPG) using the cofactor NAD. The first reaction step involves the formation of a hemiacetal intermediate between G3P and a cysteine residue, and this hemiacetal intermediate is then oxidized to a thioester, with concomitant reduction of NAD to NADH. The reduced NADH is then exchanged with the second NAD, and the thioester is attacked by a nucleophilic inorganic phosphate to produce BPG. In Mycobacterium avium, this protein is Glyceraldehyde-3-phosphate dehydrogenase (gapA).